Here is a 973-residue protein sequence, read N- to C-terminus: E3 ubiquitin-protein ligase MIB2 (973 aa).

One can recognise an MIB/HERC2 1 domain in the interval 1–80 (MDLDPHAGVQ…AHDLLLYDNA (80 aa)). The ZZ-type zinc finger occupies 86–138 (HPNIICDCCKKHGLRGMRWKCRVCFDYDLCTQCYMHNKHDLTHAFERYETSHS). Residues Cys91, Cys94, Cys106, Cys109, Cys115, Cys118, His124, and His128 each contribute to the Zn(2+) site. The region spanning 149–227 (LPRIPLRGIF…KVDLRCVGEA (79 aa)) is the MIB/HERC2 2 domain. Position 251 is a phosphoserine (Ser251). ANK repeat units lie at residues 480-509 (QGRTALQVAAYLGQVELVRLLLQARASMDL), 513-542 (EGNTVLHYTAMGNQPEATRVLLSAGCAVDA), 546-575 (TRSTALHVAVQRGFLEVVKILCERGCDVNL), 579-611 (HADTPLHSAISAGAGASSIVEVLTEVPGIDVTA), 615-644 (QGFTLLHHASLKGHVLAVRKILARARQLVD), 649-679 (DGFTALHLAALNNHREVAQVLIREGRCDVNV), 683-712 (KLQSPLHLAVQQAHLGLVPLLVDAGCSVNT), 716-744 (EGDTALHVALQRHQLLPLVADRAGGDPGP), and 785-814 (RGRSPLDLATEGRVLKALQGCAQRFRERQA). RING-type zinc fingers lie at residues 850–885 (CLVCSELALLILFSPCQHRTVCEECARRMKKCIRCQ) and 929–962 (CPICIDSHIRLVFQCGHGACAPCGAALNACPICR).

Interacts with actin monomer. In terms of processing, ubiquitinated. Possibly via autoubiquitination. In terms of tissue distribution, highly expressed in brain, heart, liver and kidney.

The protein localises to the cytoplasm. It localises to the endosome. It carries out the reaction S-ubiquitinyl-[E2 ubiquitin-conjugating enzyme]-L-cysteine + [acceptor protein]-L-lysine = [E2 ubiquitin-conjugating enzyme]-L-cysteine + N(6)-ubiquitinyl-[acceptor protein]-L-lysine.. It participates in protein modification; protein ubiquitination. Functionally, E3 ubiquitin-protein ligase that mediates ubiquitination of Delta receptors, which act as ligands of Notch proteins. Positively regulates the Delta-mediated Notch signaling by ubiquitinating the intracellular domain of Delta, leading to endocytosis of Delta receptors. In Mus musculus (Mouse), this protein is E3 ubiquitin-protein ligase MIB2 (Mib2).